We begin with the raw amino-acid sequence, 436 residues long: tRNA-2-methylthio-N(6)-dimethylallyladenosine synthase (436 aa).

The region spanning 5-121 is the MTTase N-terminal domain; it reads RKLFIKTYGC…LPDMLDRTEG (117 aa). Residues Cys-14, Cys-50, Cys-84, Cys-158, Cys-162, and Cys-165 each contribute to the [4Fe-4S] cluster site. Positions 144 to 374 constitute a Radical SAM core domain; it reads ATRGPAAFLT…TEQQRAAQMA (231 aa). The region spanning 373-435 is the TRAM domain; sequence MAMVGREVGV…PNSLAGERLG (63 aa).

This sequence belongs to the methylthiotransferase family. MiaB subfamily. As to quaternary structure, monomer. Requires [4Fe-4S] cluster as cofactor.

The protein localises to the cytoplasm. It carries out the reaction N(6)-dimethylallyladenosine(37) in tRNA + (sulfur carrier)-SH + AH2 + 2 S-adenosyl-L-methionine = 2-methylsulfanyl-N(6)-dimethylallyladenosine(37) in tRNA + (sulfur carrier)-H + 5'-deoxyadenosine + L-methionine + A + S-adenosyl-L-homocysteine + 2 H(+). Catalyzes the methylthiolation of N6-(dimethylallyl)adenosine (i(6)A), leading to the formation of 2-methylthio-N6-(dimethylallyl)adenosine (ms(2)i(6)A) at position 37 in tRNAs that read codons beginning with uridine. This chain is tRNA-2-methylthio-N(6)-dimethylallyladenosine synthase, found in Cereibacter sphaeroides (strain ATCC 17029 / ATH 2.4.9) (Rhodobacter sphaeroides).